A 290-amino-acid polypeptide reads, in one-letter code: ATP synthase gamma chain (290 aa).

This sequence belongs to the ATPase gamma chain family. In terms of assembly, F-type ATPases have 2 components, CF(1) - the catalytic core - and CF(0) - the membrane proton channel. CF(1) has five subunits: alpha(3), beta(3), gamma(1), delta(1), epsilon(1). CF(0) has three main subunits: a, b and c.

The protein resides in the cell inner membrane. Functionally, produces ATP from ADP in the presence of a proton gradient across the membrane. The gamma chain is believed to be important in regulating ATPase activity and the flow of protons through the CF(0) complex. The sequence is that of ATP synthase gamma chain from Anaeromyxobacter sp. (strain Fw109-5).